The primary structure comprises 310 residues: Protein-L-isoaspartate O-methyltransferase (310 aa).

Disordered regions lie at residues 1–46 (MSGE…DKPA) and 60–79 (ALPG…TVLK). A compositionally biased stretch (basic and acidic residues) spans 14-34 (EDLKRAPRKSEVRSGSGERHA). Residues 35 to 46 (ASAVPKAADKPA) are compositionally biased toward low complexity. Residue Ser-157 is part of the active site.

This sequence belongs to the methyltransferase superfamily. L-isoaspartyl/D-aspartyl protein methyltransferase family.

It localises to the cytoplasm. The catalysed reaction is [protein]-L-isoaspartate + S-adenosyl-L-methionine = [protein]-L-isoaspartate alpha-methyl ester + S-adenosyl-L-homocysteine. In terms of biological role, catalyzes the methyl esterification of L-isoaspartyl residues in peptides and proteins that result from spontaneous decomposition of normal L-aspartyl and L-asparaginyl residues. It plays a role in the repair and/or degradation of damaged proteins. This Burkholderia ambifaria (strain ATCC BAA-244 / DSM 16087 / CCUG 44356 / LMG 19182 / AMMD) (Burkholderia cepacia (strain AMMD)) protein is Protein-L-isoaspartate O-methyltransferase.